The following is a 311-amino-acid chain: Aquaporin NIP3-1 (311 aa).

A disordered region spans residues 1 to 34 (MEMAAPNGGGAAGMSSPVNGASAPATPGTPAPLF). Residues 20 to 34 (GASAPATPGTPAPLF) show a composition bias toward low complexity. 2 consecutive transmembrane segments (helical) span residues 85–105 (LGAEFVGTFILIFFATAAPIV) and 111–131 (GAISPFGNAACAGLAVTTIIL). The short motif at 142–144 (NPS) is the NPA 1 element. A run of 3 helical transmembrane segments spans residues 158-178 (LQVPAYVAVQVLGSICAGFAL), 202-222 (AFFTEFIITFNLLFVVTAVAT), and 226-246 (AVGELAGIAVGAAVTLNILIA). The NPA 2 motif lies at 255 to 257 (NPV). The helical transmembrane segment at 273–293 (WIYLIAPTLGAVAGAGVYTAV) threads the bilayer.

The protein belongs to the MIP/aquaporin (TC 1.A.8) family. NIP (TC 1.A.8.12) subfamily. As to expression, expressed in roots and leaves.

Its subcellular location is the membrane. In terms of biological role, aquaporins facilitate the transport of water and small neutral solutes across cell membranes. The sequence is that of Aquaporin NIP3-1 (NIP3-1) from Oryza sativa subsp. japonica (Rice).